The following is a 242-amino-acid chain: ATP-dependent dethiobiotin synthetase BioD 1 (242 aa).

An ATP-binding site is contributed by 12–17; the sequence is NVGKTT. Residue threonine 16 participates in Mg(2+) binding. Lysine 37 is a catalytic residue. Aspartate 66 is an ATP binding site. Residues aspartate 66 and glutamate 124 each contribute to the Mg(2+) site. Residues 184 to 185, 213 to 215, and glutamate 220 contribute to the ATP site; these read NR and PYL.

Belongs to the dethiobiotin synthetase family. As to quaternary structure, homodimer. Requires Mg(2+) as cofactor.

It localises to the cytoplasm. The catalysed reaction is (7R,8S)-7,8-diammoniononanoate + CO2 + ATP = (4R,5S)-dethiobiotin + ADP + phosphate + 3 H(+). Its pathway is cofactor biosynthesis; biotin biosynthesis; biotin from 7,8-diaminononanoate: step 1/2. Its function is as follows. Catalyzes a mechanistically unusual reaction, the ATP-dependent insertion of CO2 between the N7 and N8 nitrogen atoms of 7,8-diaminopelargonic acid (DAPA, also called 7,8-diammoniononanoate) to form a ureido ring. The chain is ATP-dependent dethiobiotin synthetase BioD 1 from Haemophilus influenzae (strain ATCC 51907 / DSM 11121 / KW20 / Rd).